The sequence spans 335 residues: NADH-quinone oxidoreductase subunit H (335 aa).

Helical transmembrane passes span 11-31 (VILTVVRAIVVLLAVVVCGAL), 81-101 (MIFTLAPVVAMSALLIAFVVI), 114-134 (IGLLFFFAMAGLSVYAVLFAG), 154-174 (VSYEVFLGLALMGVVVQVGSF), 187-207 (LWFIIPQFFGFCTFFIAGVAV), 238-258 (FFVGEYIGIILISALLVTLFF), 270-290 (QVPFLWFALKTAFFIMLFILL), and 307-327 (WKFCLPLTLINLLVTAAVVLY).

Belongs to the complex I subunit 1 family. In terms of assembly, NDH-1 is composed of 13 different subunits. Subunits NuoA, H, J, K, L, M, N constitute the membrane sector of the complex.

It localises to the cell inner membrane. It carries out the reaction a quinone + NADH + 5 H(+)(in) = a quinol + NAD(+) + 4 H(+)(out). Functionally, NDH-1 shuttles electrons from NADH, via FMN and iron-sulfur (Fe-S) centers, to quinones in the respiratory chain. The immediate electron acceptor for the enzyme in this species is believed to be ubiquinone. Couples the redox reaction to proton translocation (for every two electrons transferred, four hydrogen ions are translocated across the cytoplasmic membrane), and thus conserves the redox energy in a proton gradient. This subunit may bind ubiquinone. The chain is NADH-quinone oxidoreductase subunit H from Pseudomonas entomophila (strain L48).